Reading from the N-terminus, the 505-residue chain is Catalase (505 aa).

Residues His56 and Asn129 contribute to the active site. Tyr339 lines the heme pocket.

Belongs to the catalase family. Requires heme as cofactor.

Its subcellular location is the cytoplasm. It carries out the reaction 2 H2O2 = O2 + 2 H2O. Functionally, decomposes hydrogen peroxide into water and oxygen; serves to protect cells from the toxic effects of hydrogen peroxide. In Helicobacter pylori (strain ATCC 700392 / 26695) (Campylobacter pylori), this protein is Catalase (katA).